Here is a 75-residue protein sequence, read N- to C-terminus: UPF0235 protein Ava_3894 (75 aa).

The tract at residues 1–32 is disordered; that stretch reads MQKKVKVKPNSKQQKIAEQDDGSLTVHLKSPP.

It belongs to the UPF0235 family.

In Trichormus variabilis (strain ATCC 29413 / PCC 7937) (Anabaena variabilis), this protein is UPF0235 protein Ava_3894.